A 377-amino-acid polypeptide reads, in one-letter code: ATP phosphoribosyltransferase regulatory subunit (377 aa).

It belongs to the class-II aminoacyl-tRNA synthetase family. HisZ subfamily. In terms of assembly, heteromultimer composed of HisG and HisZ subunits.

The protein resides in the cytoplasm. It functions in the pathway amino-acid biosynthesis; L-histidine biosynthesis; L-histidine from 5-phospho-alpha-D-ribose 1-diphosphate: step 1/9. Its function is as follows. Required for the first step of histidine biosynthesis. May allow the feedback regulation of ATP phosphoribosyltransferase activity by histidine. This chain is ATP phosphoribosyltransferase regulatory subunit, found in Sinorhizobium medicae (strain WSM419) (Ensifer medicae).